Consider the following 59-residue polypeptide: Large ribosomal subunit protein bL33 (59 aa).

Belongs to the bacterial ribosomal protein bL33 family.

The protein is Large ribosomal subunit protein bL33 of Borrelia turicatae (strain 91E135).